A 108-amino-acid chain; its full sequence is Ig kappa chain V-V region HP 93G7 (108 aa).

Residues 1–23 (DIQMTQTTSSLSASLGDRVTISC) form a framework-1 region. C23 and C88 are oxidised to a cystine. The interval 24-34 (RASQDISNYLN) is complementarity-determining-1. The interval 35-49 (WYQQKPDGTVKLLIY) is framework-2. A complementarity-determining-2 region spans residues 50-56 (YTSRLHS). Residues 57 to 88 (GVPSRFSGSGSGTDYSLTISNLEQEDIATYFC) form a framework-3 region. The segment at 89–97 (QQGNMLPRT) is complementarity-determining-3. The framework-4 stretch occupies residues 98–108 (FGGGTKLEIKR).

This is Ig kappa chain V-V region HP 93G7 from Mus musculus (Mouse).